Reading from the N-terminus, the 70-residue chain is Sec-independent protein translocase protein TatA (70 aa).

A helical membrane pass occupies residues 1–21 (MFGLGGQELLLILLIILLLFG). Positions 47–70 (EDEFNKAMSDPPEKKEKESPSDKG) are disordered. The span at 57-70 (PPEKKEKESPSDKG) shows a compositional bias: basic and acidic residues.

This sequence belongs to the TatA/E family. As to quaternary structure, forms a complex with TatC.

The protein resides in the cell inner membrane. Functionally, part of the twin-arginine translocation (Tat) system that transports large folded proteins containing a characteristic twin-arginine motif in their signal peptide across membranes. TatA could form the protein-conducting channel of the Tat system. This Prosthecochloris aestuarii (strain DSM 271 / SK 413) protein is Sec-independent protein translocase protein TatA.